We begin with the raw amino-acid sequence, 349 residues long: Glycerol-3-phosphate dehydrogenase [NAD(+)], cytoplasmic (349 aa).

An NAD(+)-binding site is contributed by 10 to 15; the sequence is GSGNWG. Lysine 120 provides a ligand contact to substrate. Alanine 153 is a binding site for NAD(+). Serine 154 is modified (phosphoserine). Lysine 204 functions as the Proton acceptor in the catalytic mechanism. Arginine 269 contributes to the NAD(+) binding site. 269–270 provides a ligand contact to substrate; that stretch reads RN. Lysine 289 carries the N6-succinyllysine modification. NAD(+)-binding residues include lysine 296 and glutamine 298. A Phosphotyrosine modification is found at tyrosine 326.

The protein belongs to the NAD-dependent glycerol-3-phosphate dehydrogenase family. In terms of assembly, homodimer.

The protein localises to the cytoplasm. It catalyses the reaction sn-glycerol 3-phosphate + NAD(+) = dihydroxyacetone phosphate + NADH + H(+). Functionally, has glycerol-3-phosphate dehydrogenase activity. This is Glycerol-3-phosphate dehydrogenase [NAD(+)], cytoplasmic from Rattus norvegicus (Rat).